The chain runs to 231 residues: (S)-2-haloacid dehalogenase 4A (231 aa).

Aspartate 11 (nucleophile) is an active-site residue. Residues 12 to 13, arginine 42, and 119 to 120 each bind an (S)-2-haloacid; these read AY and SN. The tract at residues 176 to 181 is important for catalytic activity; sequence SSNAWD.

Belongs to the HAD-like hydrolase superfamily. S-2-haloalkanoic acid dehalogenase family.

The enzyme catalyses an (S)-2-haloacid + H2O = a (2R)-2-hydroxycarboxylate + a halide anion + H(+). The catalysed reaction is (S)-2-chloropropanoate + H2O = (R)-lactate + chloride + H(+). Its function is as follows. Catalyzes the hydrolytic dehalogenation of small (S)-2-haloalkanoic acids to yield the corresponding (R)-2-hydroxyalkanoic acids. Acts on acids of short chain lengths, C(2) to C(4), with inversion of configuration at C-3. Active with 2-halogenated carboxylic acids and converts only the S-isomer (or L-isomer) of 2-chloropropionic acid with inversion of configuration to produce R-lactate (or D-isomer). This is (S)-2-haloacid dehalogenase 4A from Burkholderia cepacia (Pseudomonas cepacia).